We begin with the raw amino-acid sequence, 79 residues long: Darcynin (79 aa).

This sequence belongs to the darcynin family.

The sequence is that of Darcynin from Chromobacterium violaceum (strain ATCC 12472 / DSM 30191 / JCM 1249 / CCUG 213 / NBRC 12614 / NCIMB 9131 / NCTC 9757 / MK).